The primary structure comprises 246 residues: Probable transcriptional regulatory protein NT01CX_1819 (246 aa).

It belongs to the TACO1 family.

The protein resides in the cytoplasm. This chain is Probable transcriptional regulatory protein NT01CX_1819, found in Clostridium novyi (strain NT).